An 83-amino-acid polypeptide reads, in one-letter code: Defensin-2 (83 aa).

Residues 1-33 form the signal peptide; it reads MAGKGVGTPLSALFLLVLLVVTIGMMEVQVAEG. 4 disulfide bridges follow: Cys-36–Cys-82, Cys-47–Cys-67, Cys-53–Cys-76, and Cys-57–Cys-78.

This sequence belongs to the DEFL family.

It localises to the secreted. In terms of biological role, plant defense peptide. Has antifungal activity. The sequence is that of Defensin-2 from Pinus sylvestris (Scotch pine).